Here is a 436-residue protein sequence, read N- to C-terminus: Gamma-glutamyl phosphate reductase (436 aa).

The protein belongs to the gamma-glutamyl phosphate reductase family.

Its subcellular location is the cytoplasm. The catalysed reaction is L-glutamate 5-semialdehyde + phosphate + NADP(+) = L-glutamyl 5-phosphate + NADPH + H(+). It participates in amino-acid biosynthesis; L-proline biosynthesis; L-glutamate 5-semialdehyde from L-glutamate: step 2/2. Catalyzes the NADPH-dependent reduction of L-glutamate 5-phosphate into L-glutamate 5-semialdehyde and phosphate. The product spontaneously undergoes cyclization to form 1-pyrroline-5-carboxylate. This chain is Gamma-glutamyl phosphate reductase, found in Prochlorococcus marinus subsp. pastoris (strain CCMP1986 / NIES-2087 / MED4).